A 313-amino-acid polypeptide reads, in one-letter code: MKRTGILLVNLGTPKDSSKTEVRKYLKTFLSDRRVIKIHPIIWKPILNGIILNIRPKKSAKLYQKICTENGFPLLEYTEKQMENLKNICPEVEVTIGMSYSEPSIETALDTLLSKEIEELNVIPMYPQYSGTTVGSVFDSVMNYFIKSDRIVDIKFIRSFYNNPQYIDYFSKKINEALNESPIDAIVFSYHGIPMSYVKDGDNYPKECTKTTKLIMDKLGDIRYYQTYQSKFGPSEWLKPATDDTLKKLPSKGIKNILIVAPGFVVDCLETIEELEHENRNYFLENGGEVYKYVHPFNGDIEFAKLVKDIISL.

Residues histidine 191 and glutamate 270 each contribute to the Fe(2+) site.

This sequence belongs to the ferrochelatase family.

The protein resides in the cytoplasm. The catalysed reaction is Fe-coproporphyrin III + 2 H(+) = coproporphyrin III + Fe(2+). The protein operates within porphyrin-containing compound metabolism; protoheme biosynthesis. Involved in coproporphyrin-dependent heme b biosynthesis. Catalyzes the insertion of ferrous iron into coproporphyrin III to form Fe-coproporphyrin III. This chain is Coproporphyrin III ferrochelatase, found in Enterococcus faecalis (strain ATCC 700802 / V583).